Here is a 233-residue protein sequence, read N- to C-terminus: Lipoprotein-releasing system ATP-binding protein LolD (233 aa).

The ABC transporter domain occupies 7–233; sequence IHCEKLSKTY…QLQSESERNH (227 aa). 43–50 provides a ligand contact to ATP; the sequence is GASGAGKS.

It belongs to the ABC transporter superfamily. Lipoprotein translocase (TC 3.A.1.125) family. In terms of assembly, the complex is composed of two ATP-binding proteins (LolD) and two transmembrane proteins (LolC and LolE).

The protein resides in the cell inner membrane. Functionally, part of the ABC transporter complex LolCDE involved in the translocation of mature outer membrane-directed lipoproteins, from the inner membrane to the periplasmic chaperone, LolA. Responsible for the formation of the LolA-lipoprotein complex in an ATP-dependent manner. The sequence is that of Lipoprotein-releasing system ATP-binding protein LolD from Coxiella burnetii (strain RSA 493 / Nine Mile phase I).